Consider the following 452-residue polypeptide: MPEFLEDPSVLTKDKLKSELVANNVTLPAGEQRKDVYVQLYLQHLTARNRPPLAAGANSKGPPDFSSDEEREPTPVLGSGASVGRGRGAVGRKATKKTDKPRLEDKDDLDVTELSNEELLDQLVRYGVNPGPIVGTTRKLYEKKLLKLREQGTESRSSTPLPTVSSSAENTRQNGSNDSDRYSDNDEDSKIELKLEKREPLKGRAKTPVTLKQRRTEHNQSYSQAGVTETEWTSGSSTGGPLQALTRESTRGSRRTPRKRVETSQHFRIDGAVISESTPIAETIKASSNESLVANRLTGNFKHASSILPITEFSDITRRTPKKPLTRAEVGEKTEERRVDRDILKEMFPYEASTPTGISASCRRPIKGAAGRPLELSDFRMEESFSSKYVPKYAPLADVKSEKTKKRRSVPMWIKMLLFALVAVFLFLVYQAMETNQGNPFTNFLQDTKISN.

The tract at residues 1–409 (MPEFLEDPSV…KSEKTKKRRS (409 aa)) is nucleoplasmic. Residues 5 to 48 (LEDPSVLTKDKLKSELVANNVTLPAGEQRKDVYVQLYLQHLTAR) form the LEM-like domain. 2 disordered regions span residues 48–111 (RNRP…DLDV) and 149–263 (REQG…RVET). A linker region spans residues 49 to 108 (NRPPLAAGANSKGPPDFSSDEEREPTPVLGSGASVGRGRGAVGRKATKKTDKPRLEDKDD). S59, S66, and S67 each carry phosphoserine. The residue at position 74 (T74) is a Phosphothreonine. S79 and S82 each carry phosphoserine. 2 positions are modified to omega-N-methylarginine: R85 and R87. The segment covering 96–105 (KKTDKPRLED) has biased composition (basic and acidic residues). The 45-residue stretch at 109–153 (LDVTELSNEELLDQLVRYGVNPGPIVGTTRKLYEKKLLKLREQGT) folds into the LEM domain. Residues 137–242 (TRKLYEKKLL…TSGSSTGGPL (106 aa)) form an NAKAP95-binding N region. T153 carries the phosphothreonine modification. Residues 154 to 177 (ESRSSTPLPTVSSSAENTRQNGSN) show a composition bias toward polar residues. 2 positions are modified to phosphoserine: S155 and S158. A phosphothreonine mark is found at T159 and T163. Phosphoserine occurs at positions 165, 167, and 176. Residues 178-202 (DSDRYSDNDEDSKIELKLEKREPLK) show a composition bias toward basic and acidic residues. S179 carries the phosphoserine; by PKC modification. Phosphoserine occurs at positions 183 and 189. Position 206 is an N6-acetyllysine (K206). Residue T210 is modified to Phosphothreonine. 2 positions are modified to phosphoserine: S221 and S223. Low complexity predominate over residues 226–240 (GVTETEWTSGSSTGG). Residues S249, S253, S264, S291, S305, and S306 each carry the phosphoserine modification. Residues 298-370 (TGNFKHASSI…SCRRPIKGAA (73 aa)) are binds lamins B. The interval 299–373 (GNFKHASSIL…RPIKGAAGRP (75 aa)) is NAKAP95-binding C. At T311 the chain carries Phosphothreonine. Residue S314 is modified to Phosphoserine. R319 is modified (citrulline). 3 positions are modified to phosphoserine: S361, S377, and S384. K388 carries the post-translational modification N6-acetyllysine. K400 participates in a covalent cross-link: Glycyl lysine isopeptide (Lys-Gly) (interchain with G-Cter in SUMO2). At S401 the chain carries Phosphoserine. A helical; Signal-anchor for type II membrane protein transmembrane segment spans residues 410 to 430 (VPMWIKMLLFALVAVFLFLVY). Topologically, residues 431-452 (QAMETNQGNPFTNFLQDTKISN) are lumenal.

This sequence belongs to the LEM family. As to quaternary structure, interacts with LMNB1, LMNB2, BANF1, AKAP8L, GMCL and chromosomes. Mitosis-specific phosphorylation specifically abolishes its binding to lamin B and chromosomes. Post-translationally, citrullinated by PADI4.

Its subcellular location is the nucleus inner membrane. It localises to the chromosome. Functionally, may help direct the assembly of the nuclear lamina and thereby help maintain the structural organization of the nuclear envelope. Possible receptor for attachment of lamin filaments to the inner nuclear membrane. May be involved in the control of initiation of DNA replication through its interaction with NAKAP95. The protein is Lamina-associated polypeptide 2, isoforms beta/delta/epsilon/gamma (Tmpo) of Mus musculus (Mouse).